The sequence spans 59 residues: Large ribosomal subunit protein uL30 (59 aa).

It belongs to the universal ribosomal protein uL30 family. In terms of assembly, part of the 50S ribosomal subunit.

This Psychrobacter arcticus (strain DSM 17307 / VKM B-2377 / 273-4) protein is Large ribosomal subunit protein uL30.